Here is a 196-residue protein sequence, read N- to C-terminus: FMN-dependent NADH:quinone oxidoreductase (196 aa).

Serine 10 contributes to the FMN binding site.

The protein belongs to the azoreductase type 1 family. Homodimer. The cofactor is FMN.

The enzyme catalyses 2 a quinone + NADH + H(+) = 2 a 1,4-benzosemiquinone + NAD(+). The catalysed reaction is N,N-dimethyl-1,4-phenylenediamine + anthranilate + 2 NAD(+) = 2-(4-dimethylaminophenyl)diazenylbenzoate + 2 NADH + 2 H(+). In terms of biological role, quinone reductase that provides resistance to thiol-specific stress caused by electrophilic quinones. Its function is as follows. Also exhibits azoreductase activity. Catalyzes the reductive cleavage of the azo bond in aromatic azo compounds to the corresponding amines. This Cereibacter sphaeroides (strain KD131 / KCTC 12085) (Rhodobacter sphaeroides) protein is FMN-dependent NADH:quinone oxidoreductase.